The chain runs to 559 residues: T-complex protein 1 subunit gamma (559 aa).

A disulfide bond links cysteine 369 and cysteine 375. The interval 537-559 (GGASVTDGNGQEIPETFGDARDG) is disordered.

This sequence belongs to the TCP-1 chaperonin family. Heterooligomeric complex of about 850 to 900 kDa that forms two stacked rings, 12 to 16 nm in diameter.

It is found in the cytoplasm. Its function is as follows. Molecular chaperone; assists the folding of proteins upon ATP hydrolysis. Known to play a role, in vitro, in the folding of actin and tubulin. This Tetrahymena pyriformis protein is T-complex protein 1 subunit gamma.